The primary structure comprises 495 residues: Lysine--tRNA ligase (495 aa).

E406 and E413 together coordinate Mg(2+).

This sequence belongs to the class-II aminoacyl-tRNA synthetase family. Homodimer. It depends on Mg(2+) as a cofactor.

Its subcellular location is the cytoplasm. It carries out the reaction tRNA(Lys) + L-lysine + ATP = L-lysyl-tRNA(Lys) + AMP + diphosphate. The polypeptide is Lysine--tRNA ligase (Leuconostoc mesenteroides subsp. mesenteroides (strain ATCC 8293 / DSM 20343 / BCRC 11652 / CCM 1803 / JCM 6124 / NCDO 523 / NBRC 100496 / NCIMB 8023 / NCTC 12954 / NRRL B-1118 / 37Y)).